A 108-amino-acid chain; its full sequence is MSWRGRRYRPRRCLRLAQLVGPMLEPSVPEPQQEEPPTESQDHTPGQKREDDQGAAEIQVPNLEADLQELSQSKTGDECGDSPDVQGKILPKSEQFKMPEGGEGKPQL.

Residues 20–108 form a disordered region; that stretch reads VGPMLEPSVP…PEGGEGKPQL (89 aa). Basic and acidic residues-rich tracts occupy residues 40–52 and 94–108; these read SQDHTPGQKREDD and EQFKMPEGGEGKPQL.

This sequence belongs to the GAGE family.

In Homo sapiens (Human), this protein is X antigen family member 5 (XAGE5).